Consider the following 424-residue polypeptide: Serine--tRNA ligase (424 aa).

232-234 provides a ligand contact to L-serine; the sequence is TAE. Residue 263–265 coordinates ATP; it reads RSE. Glu286 contacts L-serine. Residue 350 to 353 coordinates ATP; it reads EISS. Ser385 serves as a coordination point for L-serine.

It belongs to the class-II aminoacyl-tRNA synthetase family. Type-1 seryl-tRNA synthetase subfamily. In terms of assembly, homodimer. The tRNA molecule binds across the dimer.

The protein localises to the cytoplasm. The catalysed reaction is tRNA(Ser) + L-serine + ATP = L-seryl-tRNA(Ser) + AMP + diphosphate + H(+). The enzyme catalyses tRNA(Sec) + L-serine + ATP = L-seryl-tRNA(Sec) + AMP + diphosphate + H(+). It participates in aminoacyl-tRNA biosynthesis; selenocysteinyl-tRNA(Sec) biosynthesis; L-seryl-tRNA(Sec) from L-serine and tRNA(Sec): step 1/1. In terms of biological role, catalyzes the attachment of serine to tRNA(Ser). Is also able to aminoacylate tRNA(Sec) with serine, to form the misacylated tRNA L-seryl-tRNA(Sec), which will be further converted into selenocysteinyl-tRNA(Sec). The protein is Serine--tRNA ligase of Latilactobacillus sakei subsp. sakei (strain 23K) (Lactobacillus sakei subsp. sakei).